The following is a 1257-amino-acid chain: Receptor tyrosine-protein kinase erbB-2 (1257 aa).

The first 22 residues, 1–22 (MELAAWCRWGFLLALLPPGIAG), serve as a signal peptide directing secretion. Residues 23-654 (TQVCTGTDMK…PAEQRASPVT (632 aa)) lie on the Extracellular side of the membrane. An intrachain disulfide couples C26 to C53. N-linked (GlcNAc...) asparagine glycans are attached at residues N68 and N188. 16 disulfides stabilise this stretch: C163–C193, C196–C205, C200–C213, C221–C228, C225–C236, C237–C245, C241–C253, C256–C265, C269–C296, C300–C312, C316–C332, C335–C339, C343–C368, C476–C506, C513–C522, and C517–C530. A glycan (N-linked (GlcNAc...) asparagine) is linked at N260. N-linked (GlcNAc...) asparagine glycosylation is present at N532. Cystine bridges form between C533-C542, C546-C562, C565-C578, C569-C586, C589-C598, C602-C625, C628-C636, and C632-C644. Residue N573 is glycosylated (N-linked (GlcNAc...) asparagine). N-linked (GlcNAc...) asparagine glycosylation occurs at N631. The helical transmembrane segment at 655 to 677 (FIIATVVGVLLFLILVVVVGILI) threads the bilayer. Residues 678–691 (KRRRQKIRKYTMRR) are required for interaction with KPNB1 and EEA1. Positions 678–691 (KRRRQKIRKYTMRR) match the Nuclear localization signal motif. The Cytoplasmic portion of the chain corresponds to 678–1257 (KRRRQKIRKY…PEYLGLDVPV (580 aa)). A Protein kinase domain is found at 722 to 989 (LRKVKVLGSG…RMARDPQRFV (268 aa)). ATP is bound by residues 728–736 (LGSGAFGTV) and K755. Residue D847 is the Proton acceptor of the active site. Phosphotyrosine is present on Y879. Positions 1029 to 1181 (QQGFFSPDPT…PKTLSPGKNG (153 aa)) are disordered. 4 positions are modified to phosphoserine: S1056, S1080, S1085, and S1109. Y1114 is subject to Phosphotyrosine. Phosphotyrosine; by autocatalysis is present on Y1141. Pro residues predominate over residues 1149–1163 (PQPPLTPEGPLPPVR). T1168 carries the phosphothreonine modification. Residues 1197 to 1199 (EYL) are interaction with PIK3C2B. At Y1198 the chain carries Phosphotyrosine. A disordered region spans residues 1200–1257 (VPREGTASPPHPSPAFSPAFDNLYYWDQNSSEQGPPPSNFEGTPTAENPEYLGLDVPV). Y1250 bears the Phosphotyrosine; by autocatalysis mark.

It belongs to the protein kinase superfamily. Tyr protein kinase family. EGF receptor subfamily. In terms of assembly, homodimer. Heterodimer with EGFR, ERBB3 and ERBB4. Part of a complex with EGFR and either PIK3C2A or PIK3C2B. May interact with PIK3C2B when phosphorylated on Tyr-1198. Interacts with PRKCABP and PLXNB1. Interacts (when phosphorylated on Tyr-1250) with MEMO1. Interacts with MUC1. Interacts (when phosphorylated on Tyr-1141) with GRB7 (via SH2 domain). Interacts (when phosphorylated on Tyr-1250) with ERBIN Interacts with SRC, KPNB1, RANBP2, EEA1, CRM1, CLTC, PTK6, RPA194, MYOC and ACTB. Interacts with HSP90AA1 and HSP90AB1; the interaction suppresses ERBB2 kinase activity. Interacts with SORL1; this interaction regulates ERBB2 subcellular distribution by promoting its recycling after internalization from endosomes back to the plasma membrane, hence stimulates ERBB2-mediated signaling. Interacts with SH3BGRL. Interacts with ROR1. Autophosphorylated. Autophosphorylation occurs in trans, i.e. one subunit of the dimeric receptor phosphorylates tyrosine residues on the other subunit. Ligand-binding increases phosphorylation on tyrosine residues. Signaling via SEMA4C promotes phosphorylation at Tyr-1250. Dephosphorylated by PTPN12.

The protein localises to the cell membrane. Its subcellular location is the cell projection. The protein resides in the ruffle membrane. It localises to the early endosome. It is found in the cytoplasm. The protein localises to the perinuclear region. Its subcellular location is the nucleus. The enzyme catalyses L-tyrosyl-[protein] + ATP = O-phospho-L-tyrosyl-[protein] + ADP + H(+). In terms of biological role, protein tyrosine kinase that is part of several cell surface receptor complexes, but that apparently needs a coreceptor for ligand binding. Essential component of a neuregulin-receptor complex, although neuregulins do not interact with it alone. GP30 is a potential ligand for this receptor. Regulates outgrowth and stabilization of peripheral microtubules (MTs). Upon ERBB2 activation, the MEMO1-RHOA-DIAPH1 signaling pathway elicits the phosphorylation and thus the inhibition of GSK3B at cell membrane. This prevents the phosphorylation of APC and CLASP2, allowing its association with the cell membrane. In turn, membrane-bound APC allows the localization of MACF1 to the cell membrane, which is required for microtubule capture and stabilization. Interacts (preferentially with the tyrosine phosphorylated form) with CPNE3; this interaction occurs at the cell membrane and is increased in a growth factor heregulin-dependent manner. In the nucleus is involved in transcriptional regulation. Associates with the 5'-TCAAATTC-3' sequence in the PTGS2/COX-2 promoter and activates its transcription. Implicated in transcriptional activation of CDKN1A; the function involves STAT3 and SRC. Involved in the transcription of rRNA genes by RNA Pol I and enhances protein synthesis and cell growth. This Rattus norvegicus (Rat) protein is Receptor tyrosine-protein kinase erbB-2 (Erbb2).